The primary structure comprises 175 residues: CDP-archaeol synthase (175 aa).

4 helical membrane passes run 41–61 (GFFV…QLLE), 82–102 (TILI…MSFF), 122–142 (FVLG…AEQF), and 147–167 (IAVI…VGYF).

It belongs to the CDP-archaeol synthase family. Requires Mg(2+) as cofactor.

It localises to the cell membrane. The catalysed reaction is 2,3-bis-O-(geranylgeranyl)-sn-glycerol 1-phosphate + CTP + H(+) = CDP-2,3-bis-O-(geranylgeranyl)-sn-glycerol + diphosphate. It functions in the pathway membrane lipid metabolism; glycerophospholipid metabolism. Its function is as follows. Catalyzes the formation of CDP-2,3-bis-(O-geranylgeranyl)-sn-glycerol (CDP-archaeol) from 2,3-bis-(O-geranylgeranyl)-sn-glycerol 1-phosphate (DGGGP) and CTP. This reaction is the third ether-bond-formation step in the biosynthesis of archaeal membrane lipids. This Methanococcoides burtonii (strain DSM 6242 / NBRC 107633 / OCM 468 / ACE-M) protein is CDP-archaeol synthase.